Here is a 511-residue protein sequence, read N- to C-terminus: Histidine ammonia-lyase (511 aa).

Positions 142-144 form a cross-link, 5-imidazolinone (Ala-Gly); that stretch reads ASG. At Ser-143 the chain carries 2,3-didehydroalanine (Ser).

The protein belongs to the PAL/histidase family. Contains an active site 4-methylidene-imidazol-5-one (MIO), which is formed autocatalytically by cyclization and dehydration of residues Ala-Ser-Gly.

The protein resides in the cytoplasm. It catalyses the reaction L-histidine = trans-urocanate + NH4(+). It participates in amino-acid degradation; L-histidine degradation into L-glutamate; N-formimidoyl-L-glutamate from L-histidine: step 1/3. This chain is Histidine ammonia-lyase, found in Chelativorans sp. (strain BNC1).